We begin with the raw amino-acid sequence, 843 residues long: Phosphatidylinositol-glycan-specific phospholipase D (843 aa).

The first 23 residues, 1-23 (MSVGRLWSGLLLLLLFFCSRSSS), serve as a signal peptide directing secretion. Residues N94, N271, N292, N308, and N322 are each glycosylated (N-linked (GlcNAc...) asparagine). FG-GAP repeat units follow at residues 368-429 (SPSA…GLPP), 435-498 (DKEA…GRLS), 500-560 (SPNI…RNDK), 564-625 (TLDE…SLGR), 635-695 (QREI…GATR), 707-773 (ALFS…TLGD), and 791-843 (QYVL…FSSD). N483, N502, N592, N605, and N661 each carry an N-linked (GlcNAc...) asparagine glycan.

This sequence belongs to the GPLD1 family. Monomer. Post-translationally, glycosylated.

The protein resides in the secreted. The catalysed reaction is a 6-(alpha-D-glucosaminyl)-1-(1,2-diacyl-sn-glycero-3-phospho)-1D-myo-inositol + H2O = 6-(alpha-D-glucosaminyl)-1D-myo-inositol + a 1,2-diacyl-sn-glycero-3-phosphate + H(+). Its function is as follows. This protein hydrolyzes the inositol phosphate linkage in proteins anchored by phosphatidylinositol glycans (GPI-anchor) thus releasing these proteins from the membrane. The polypeptide is Phosphatidylinositol-glycan-specific phospholipase D (Gpld1) (Rattus norvegicus (Rat)).